Reading from the N-terminus, the 857-residue chain is Protein sip-5 (857 aa).

Disordered stretches follow at residues 1–81, 157–231, 384–416, 466–517, 545–747, and 763–857; these read MGNA…ARRL, GLPI…FKPT, SESS…APNV, FGRR…GNRR, KAEK…PMFN, and HAGK…QVTL. Basic and acidic residues-rich tracts occupy residues 7-16 and 36-48; these read KESRGDDSGR and ESSR…RHDL. A compositionally biased stretch (low complexity) spans 49–61; it reads TGLLGRAAGGSSS. Residues 62 to 81 are compositionally biased toward basic and acidic residues; it reads HADERHERKETKQEREARRL. 2 stretches are compositionally biased toward polar residues: residues 179–191 and 199–208; these read ASPT…TNHL and SLSTASEHST. 3 stretches are compositionally biased toward low complexity: residues 209–230, 384–394, and 476–504; these read SNAG…PFKP, SESSVNSGSLS, and SASA…TANT. The segment covering 545 to 572 has biased composition (basic and acidic residues); that stretch reads KAEKEEQKEAKKREKEREKAEKKAEKAA. Low complexity-rich tracts occupy residues 586-604 and 621-645; these read SRSG…PGLS and ASVA…ALAP. The span at 648–657 shows a compositional bias: basic and acidic residues; that stretch reads STKDKGKAVD. Positions 688–697 are enriched in low complexity; it reads SSASSASSSA. Positions 698–712 are enriched in polar residues; it reads VESNQGSYVPPSNLQ. Over residues 783–799 the composition is skewed to basic and acidic residues; that stretch reads ETAKSGEGAGEHVEHVL. Polar residues-rich tracts occupy residues 800 to 838 and 845 to 857; these read DSQT…STAS and NETT…QVTL.

Belongs to the SIP5 family.

The protein localises to the cytoplasm. May negatively regulate the snf-1 kinase. The chain is Protein sip-5 (sip-5) from Neurospora crassa (strain ATCC 24698 / 74-OR23-1A / CBS 708.71 / DSM 1257 / FGSC 987).